A 534-amino-acid chain; its full sequence is Zinc finger protein 703-A (534 aa).

Disordered regions lie at residues 1 to 35 (MNCS…THPV), 90 to 251 (SQIG…VAPV), and 300 to 320 (QLPG…LTGA). Composition is skewed to low complexity over residues 15-34 (QSSS…PTHP), 115-124 (RSSSLKLGES), and 146-155 (GSSAGGSADK). Over residues 173-182 (SPSSRVSSPG) the composition is skewed to polar residues. Over residues 185–200 (CDSKNNESQEKKEPEA) the composition is skewed to basic and acidic residues. Positions 204 to 217 (SLETSQANPTLTRA) are enriched in polar residues. Low complexity predominate over residues 218-229 (SISNSSAESSQS). Positions 230–239 (GDVTPSSKSD) are enriched in polar residues. The segment at 406-434 (HICNWVSASGPCDKRFATSEELLAHLRTH) adopts a C2H2-type zinc-finger fold.

The protein belongs to the Elbow/Noc family.

It is found in the nucleus. Its subcellular location is the cytoplasm. In terms of biological role, transcriptional corepressor which does not bind directly to DNA and may regulate transcription through recruitment of histone deacetylases to gene promoters. Regulates cell adhesion, migration and proliferation. Involved in specification of the lateral neural plate border (NPB). May be required for segmental gene expression during hindbrain development. The protein is Zinc finger protein 703-A (znf703-a) of Xenopus laevis (African clawed frog).